Here is a 1538-residue protein sequence, read N- to C-terminus: Arf-GAP with Rho-GAP domain, ANK repeat and PH domain-containing protein 3 (1538 aa).

The 65-residue stretch at 4 to 68 folds into the SAM domain; it reads PQDLDIAVWL…LRLLRAGSAE (65 aa). Disordered regions lie at residues 72-97, 125-149, and 215-242; these read DSHL…PVPK, SRNS…SVPN, and ASDR…EDAG. The span at 82–97 shows a compositional bias: pro residues; it reads TPSPAPDAQPPKPVPK. Over residues 216–241 the composition is skewed to basic and acidic residues; it reads SDRRDGRGVCQERAEHRQDLETREDA. PH domains follow at residues 282–374 and 389–478; these read VPLL…SCLK and RPLR…EAVT. Positions 479-606 constitute an Arf-GAP domain; the sequence is ETLSDYEVAE…LFRKPHPRHP (128 aa). PH domains follow at residues 671 to 785 and 795 to 901; these read ATYR…FSPL and LLRM…AGGG. Residues 903-1084 enclose the Rho-GAP domain; sequence TGLQEQQMSR…ELIDGYISVF (182 aa). The Ras-associating domain occupies 1113 to 1206; it reads GDLIMEVYIE…ASLLLRKVSM (94 aa). In terms of domain architecture, PH 5 spans 1219-1321; the sequence is ESPRVGLLRC…WTTSILKAQH (103 aa). Phosphothreonine is present on Thr-1344. A phosphotyrosine mark is found at Tyr-1399 and Tyr-1404. The segment covering 1425–1439 has biased composition (polar residues); that stretch reads WSAKSDPSLTSQRSF. Residues 1425–1538 are disordered; it reads WSAKSDPSLT…SNPPSSQPLT (114 aa). Phosphoserine occurs at positions 1438 and 1474. 2 stretches are compositionally biased toward low complexity: residues 1476–1486 and 1494–1505; these read EEQLLQELNNL and ASCPESSSQPTS. Pro residues predominate over residues 1506–1529; that stretch reads PQAPSPTSLPTPTPSLPTQPPCTS.

As to quaternary structure, interacts (via SAM domain) with INPPL1/SHIP2. Post-translationally, tyrosine phosphorylated at a low basal level. PDGF treatment stimulates phosphorylation. Tyrosine phosphorylation is increased in cells that are in the process of becoming attached to a substrate and that start spreading and flattening.

The protein resides in the cytoplasm. Its subcellular location is the cell membrane. It is found in the cytoskeleton. The protein localises to the cell projection. It localises to the lamellipodium. The protein resides in the ruffle. Phosphatidylinositol 3,4,5-trisphosphate-dependent GTPase-activating protein that modulates actin cytoskeleton remodeling by regulating ARF and RHO family members. Is activated by phosphatidylinositol 3,4,5-trisphosphate (PtdIns(3,4,5)P3) binding. Can be activated by phosphatidylinositol 3,4-bisphosphate (PtdIns(3,4,5)P2) binding, albeit with lower efficiency. Acts preferentially on ARF5 and on RHOA. This chain is Arf-GAP with Rho-GAP domain, ANK repeat and PH domain-containing protein 3 (Arap3), found in Mus musculus (Mouse).